The primary structure comprises 424 residues: UPF0597 protein Shewana3_2972 (424 aa).

The protein belongs to the UPF0597 family.

This Shewanella sp. (strain ANA-3) protein is UPF0597 protein Shewana3_2972.